Reading from the N-terminus, the 313-residue chain is Porphobilinogen deaminase (313 aa).

At Cys241 the chain carries S-(dipyrrolylmethanemethyl)cysteine.

The protein belongs to the HMBS family. As to quaternary structure, monomer. It depends on dipyrromethane as a cofactor.

The catalysed reaction is 4 porphobilinogen + H2O = hydroxymethylbilane + 4 NH4(+). The protein operates within porphyrin-containing compound metabolism; protoporphyrin-IX biosynthesis; coproporphyrinogen-III from 5-aminolevulinate: step 2/4. Tetrapolymerization of the monopyrrole PBG into the hydroxymethylbilane pre-uroporphyrinogen in several discrete steps. The polypeptide is Porphobilinogen deaminase (Sulfurimonas denitrificans (strain ATCC 33889 / DSM 1251) (Thiomicrospira denitrificans (strain ATCC 33889 / DSM 1251))).